Reading from the N-terminus, the 173-residue chain is Crossover junction endodeoxyribonuclease RuvC (173 aa).

Catalysis depends on residues Asp8, Glu69, and Asp141. Residues Asp8, Glu69, and Asp141 each coordinate Mg(2+).

Belongs to the RuvC family. As to quaternary structure, homodimer which binds Holliday junction (HJ) DNA. The HJ becomes 2-fold symmetrical on binding to RuvC with unstacked arms; it has a different conformation from HJ DNA in complex with RuvA. In the full resolvosome a probable DNA-RuvA(4)-RuvB(12)-RuvC(2) complex forms which resolves the HJ. The cofactor is Mg(2+).

It localises to the cytoplasm. The catalysed reaction is Endonucleolytic cleavage at a junction such as a reciprocal single-stranded crossover between two homologous DNA duplexes (Holliday junction).. Its function is as follows. The RuvA-RuvB-RuvC complex processes Holliday junction (HJ) DNA during genetic recombination and DNA repair. Endonuclease that resolves HJ intermediates. Cleaves cruciform DNA by making single-stranded nicks across the HJ at symmetrical positions within the homologous arms, yielding a 5'-phosphate and a 3'-hydroxyl group; requires a central core of homology in the junction. The consensus cleavage sequence is 5'-(A/T)TT(C/G)-3'. Cleavage occurs on the 3'-side of the TT dinucleotide at the point of strand exchange. HJ branch migration catalyzed by RuvA-RuvB allows RuvC to scan DNA until it finds its consensus sequence, where it cleaves and resolves the cruciform DNA. In Stenotrophomonas maltophilia (strain K279a), this protein is Crossover junction endodeoxyribonuclease RuvC.